The primary structure comprises 665 residues: Envelope glycoprotein (665 aa).

Positions Met-1–Pro-31 are cleaved as a signal peptide. A receptor-binding domain (RBD) region spans residues Val-32 to Pro-267. Residues Val-32–Leu-605 lie on the Extracellular side of the membrane. Asn-43 carries N-linked (GlcNAc...) asparagine; by host glycosylation. Cystine bridges form between Cys-77/Cys-129, Cys-103/Cys-118, Cys-104/Cys-114, Cys-152/Cys-172, and Cys-164/Cys-177. Asp-117 lines the Zn(2+) pocket. Residues Asn-199 and Asn-211 are each glycosylated (N-linked (GlcNAc...) asparagine; by host). Cys-209 and Cys-215 form a disulfide bridge. Residues Val-266–Gly-307 form a disordered region. A glycan (N-linked (GlcNAc...) asparagine; by host) is linked at Asn-324. Intrachain disulfides connect Cys-334–Cys-337, Cys-334–Cys-558, Cys-364–Cys-418, Cys-383–Cys-395, Cys-425–Cys-438, and Cys-550–Cys-557. Residues Cys-334 to Cys-337 carry the CXXC motif. Asn-356 and Asn-363 each carry an N-linked (GlcNAc...) asparagine; by host glycan. N-linked (GlcNAc...) asparagine; by host glycosylation is found at Asn-396, Asn-400, and Asn-432. The tract at residues Val-470 to Ile-490 is fusion peptide. Residues Ala-505–Val-532 adopt a coiled-coil conformation. Residues Leu-533–Leu-549 form an immunosuppression region. A CX6CC motif is present at residues Cys-550–Cys-558. Residues Ile-606–Ile-626 traverse the membrane as a helical segment. Cys-625 carries S-palmitoyl cysteine; by host lipidation. The Cytoplasmic portion of the chain corresponds to Leu-627–Glu-665. The YXXL motif; contains endocytosis signal motif lies at Tyr-650 to Leu-653.

As to quaternary structure, the mature envelope protein (Env) consists of a trimer of SU-TM heterodimers attached by a labile interchain disulfide bond. In terms of processing, specific enzymatic cleavages in vivo yield mature proteins. Envelope glycoproteins are synthesized as an inactive precursor that is N-glycosylated and processed likely by host cell furin or by a furin-like protease in the Golgi to yield the mature SU and TM proteins. The cleavage site between SU and TM requires the minimal sequence [KR]-X-[KR]-R. The R-peptide is released from the C-terminus of the cytoplasmic tail of the TM protein upon particle formation as a result of proteolytic cleavage by the viral protease. Cleavage of this peptide is required for TM to become fusogenic. Post-translationally, the CXXC motif is highly conserved across a broad range of retroviral envelope proteins. It is thought to participate in the formation of a labile disulfide bond possibly with the CX6CC motif present in the transmembrane protein. Isomerization of the intersubunit disulfide bond to an SU intrachain disulfide bond is thought to occur upon receptor recognition in order to allow membrane fusion. The transmembrane protein is palmitoylated. In terms of processing, the R-peptide is palmitoylated.

Its subcellular location is the virion membrane. It localises to the host cell membrane. Its function is as follows. The surface protein (SU) attaches the virus to the host cell by binding to its receptor. This interaction triggers the refolding of the transmembrane protein (TM) and is thought to activate its fusogenic potential by unmasking its fusion peptide. Fusion occurs at the host cell plasma membrane. In terms of biological role, the transmembrane protein (TM) acts as a class I viral fusion protein. Under the current model, the protein has at least 3 conformational states: pre-fusion native state, pre-hairpin intermediate state, and post-fusion hairpin state. During viral and target cell membrane fusion, the coiled coil regions (heptad repeats) assume a trimer-of-hairpins structure, positioning the fusion peptide in close proximity to the C-terminal region of the ectodomain. The formation of this structure appears to drive apposition and subsequent fusion of viral and target cell membranes. Membranes fusion leads to delivery of the nucleocapsid into the cytoplasm. This is Envelope glycoprotein (env) from Radiation murine leukemia virus.